Here is a 492-residue protein sequence, read N- to C-terminus: Probable cytochrome P450 313a1 (492 aa).

Position 438 (Cys-438) interacts with heme.

It belongs to the cytochrome P450 family. Heme serves as cofactor.

The protein resides in the endoplasmic reticulum membrane. It localises to the microsome membrane. Functionally, may be involved in the metabolism of insect hormones and in the breakdown of synthetic insecticides. The protein is Probable cytochrome P450 313a1 (Cyp313a1) of Drosophila melanogaster (Fruit fly).